The primary structure comprises 256 residues: Autophagy-related protein 40 (256 aa).

Positions 1-16 (MFNLILWPLFLLTSVA) are cleaved as a signal peptide. The Lumenal portion of the chain corresponds to 17–67 (IPLQLTLEVVYLTSSVDFSKASAAKTATSLGQSPVVITIYKSLLKYWSLYE). Residues 68-88 (FIHFIYLYTPIDAFLNFLPFT) form a helical membrane-spanning segment. Residues 89 to 256 (SLLMSFGSIC…DILDETTELD (168 aa)) are Cytoplasmic-facing. The disordered stretch occupies residues 197-243 (QPQGDKNRYQNGDRESTKNGAAYQKSSQQSSSFEQNFTSTEFPNDYD). A compositionally biased stretch (basic and acidic residues) spans 199–213 (QGDKNRYQNGDREST). Over residues 222 to 238 (SSQQSSSFEQNFTSTEF) the composition is skewed to low complexity. The ATG8-binding motif lies at 242 to 245 (YDFM).

In terms of assembly, interacts with ATG8 and ATG11.

The protein localises to the endoplasmic reticulum membrane. The protein resides in the preautophagosomal structure membrane. Acts as a receptor for reticulophagy. Directs autophagic sequestration of folded tubules/sheets derived from the cortical endoplasmic reticulum (cER) and the cytoplasmic endoplasmic reticulum (cytoER) into autophagosomes. Is not required for the cytoplasm-to-vacuole targeting pathway, mitophagy, pexophagy, and non-selective autophagy. This Saccharomyces cerevisiae (strain ATCC 204508 / S288c) (Baker's yeast) protein is Autophagy-related protein 40.